The primary structure comprises 367 residues: DNA replication and repair protein RecF (367 aa).

30–37 contributes to the ATP binding site; sequence GANGSGKT.

The protein belongs to the RecF family.

Its subcellular location is the cytoplasm. Its function is as follows. The RecF protein is involved in DNA metabolism; it is required for DNA replication and normal SOS inducibility. RecF binds preferentially to single-stranded, linear DNA. It also seems to bind ATP. The chain is DNA replication and repair protein RecF from Pseudomonas fluorescens (strain Pf0-1).